Here is a 335-residue protein sequence, read N- to C-terminus: Endo-beta-N-acetylglucosaminidase F2 (335 aa).

The signal sequence occupies residues M1 to S45. The GH18 domain maps to Q61–P321. Residues S73, S89, and S143 are each glycosylated (O-linked (Man...) serine). E171 functions as the Proton donor in the catalytic mechanism.

Belongs to the glycosyl hydrolase 18 family. As to quaternary structure, monomer. In terms of processing, carbohydrates at Ser-73, Ser-89 and Ser-143 consist of (2-OMe)Man1-4GlcNAcU1-4GlcU1-4Glc1-4(2-OMe)GlcU1-4[(2-OMe)Rham1-2]Man.

Its subcellular location is the secreted. It catalyses the reaction an N(4)-(oligosaccharide-(1-&gt;3)-[oligosaccharide-(1-&gt;6)]-beta-D-Man-(1-&gt;4)-beta-D-GlcNAc-(1-&gt;4)-alpha-D-GlcNAc)-L-asparaginyl-[protein] + H2O = an oligosaccharide-(1-&gt;3)-[oligosaccharide-(1-&gt;6)]-beta-D-Man-(1-&gt;4)-D-GlcNAc + N(4)-(N-acetyl-beta-D-glucosaminyl)-L-asparaginyl-[protein]. Endohydrolysis of the di-N-acetylchitobiosyl unit in high-mannose glycopeptides and glycoproteins. Complex biantennary glycans are the preferred substrates. Tri- and tetraantennary glycans are not hydrolyzed, and high mannose glycans are very poor substrates. The polypeptide is Endo-beta-N-acetylglucosaminidase F2 (endOF2) (Elizabethkingia meningoseptica (Chryseobacterium meningosepticum)).